A 142-amino-acid chain; its full sequence is Transcription antitermination protein NusB (142 aa).

Belongs to the NusB family.

Functionally, involved in transcription antitermination. Required for transcription of ribosomal RNA (rRNA) genes. Binds specifically to the boxA antiterminator sequence of the ribosomal RNA (rrn) operons. The sequence is that of Transcription antitermination protein NusB from Trichlorobacter lovleyi (strain ATCC BAA-1151 / DSM 17278 / SZ) (Geobacter lovleyi).